The sequence spans 509 residues: ATP synthase subunit alpha (509 aa).

ATP is bound at residue 171–178; that stretch reads GDRQTGKT.

This sequence belongs to the ATPase alpha/beta chains family. F-type ATPases have 2 components, CF(1) - the catalytic core - and CF(0) - the membrane proton channel. CF(1) has five subunits: alpha(3), beta(3), gamma(1), delta(1), epsilon(1). CF(0) has three main subunits: a(1), b(2) and c(9-12). The alpha and beta chains form an alternating ring which encloses part of the gamma chain. CF(1) is attached to CF(0) by a central stalk formed by the gamma and epsilon chains, while a peripheral stalk is formed by the delta and b chains.

It is found in the cell inner membrane. It catalyses the reaction ATP + H2O + 4 H(+)(in) = ADP + phosphate + 5 H(+)(out). Its function is as follows. Produces ATP from ADP in the presence of a proton gradient across the membrane. The alpha chain is a regulatory subunit. This is ATP synthase subunit alpha from Neorickettsia sennetsu (strain ATCC VR-367 / Miyayama) (Ehrlichia sennetsu).